The primary structure comprises 889 residues: Protein SEY1 homolog (889 aa).

Residues 1-801 (MDTKTQIIDY…ETGAKMSLKN (801 aa)) are Cytoplasmic-facing. A GB1/RHD3-type G domain is found at 31 to 277 (GFNYNVIAIL…IPSDGFAHYC (247 aa)). A GTP-binding site is contributed by 41-48 (GSQSSGKS). Residues 429 to 449 (RKDGKGGSSPSAGDKKDTKDT) form a disordered region. Residues 679-699 (LDEIMDVLKSKLDEISDNLSS) adopt a coiled-coil conformation. Residues 802–822 (VPLFFWVILLILGWNELLFFT) form a helical membrane-spanning segment. At 823–825 (RFF) the chain is on the lumenal side. The chain crosses the membrane as a helical span at residues 826–846 (FRLNIILPLFLAAAVILSTLV). The Cytoplasmic segment spans residues 847–889 (FNGNMEVLSIINKAVFFLAKNSFGVYRQLQAMGGKAAQGAAAD).

The protein belongs to the TRAFAC class dynamin-like GTPase superfamily. GB1/RHD3 GTPase family. RHD3 subfamily.

It is found in the endoplasmic reticulum membrane. In terms of biological role, probable GTP-binding protein involved in generating and maintaining the structure of the tubular endoplasmic reticulum network. In Plasmodium vivax (strain Salvador I), this protein is Protein SEY1 homolog.